Reading from the N-terminus, the 552-residue chain is (R)-mandelonitrile lyase-like (552 aa).

Positions 1-28 (MTKRIDSSLLYTALVVLLLLGVVHRSNA) are cleaved as a signal peptide. Residue Asn-44 is glycosylated (N-linked (GlcNAc...) asparagine). 55 to 82 (DYIIVGGGTAGCPLAATLSQSFRVLLLE) provides a ligand contact to FAD. 3 N-linked (GlcNAc...) asparagine glycosylation sites follow: Asn-162, Asn-259, and Asn-434. His-492 (proton acceptor) is an active-site residue.

Belongs to the GMC oxidoreductase family. In terms of assembly, monomer. FAD serves as cofactor. Glycosylated.

The catalysed reaction is (R)-mandelonitrile = benzaldehyde + hydrogen cyanide. The polypeptide is (R)-mandelonitrile lyase-like (Arabidopsis thaliana (Mouse-ear cress)).